Reading from the N-terminus, the 850-residue chain is MENELPVPHTSNRASVTTNTSGTNSSSGCISSSGGGGGSGGRPTAPQISVYSGIPDRQTVQVIQQALHRQPSTAAQYLQQMYAAQQQHLMLQTAALQQQHLSSAQLQSLAAVQQASLVANRQGSTPGSSVSSQAPAQSSSLNLAASPAAAQLINRAQSVNSAAASGLAQQAVLLGNTSSPALTASQAQMYLRAQMLIFTPTATVATVQPELCTGSPARPPTPAQVQNLTLRTQQTPAAAASGPPPTQPVLPSLALKPTPSSSQPLPAPPQGRTMAQGSPAGAKPSGTDNAPETLKAGDGNCNMEGRPGPGRAVPAVATHPLIAPAYAHLQSHQLLPQPPAKHPQPQFVAQQQPQPPRPAPQVQSQPQLASVSPSLALQSSPEDHALPLGSVTQALPLQCSTTHVHKPGNSQQCHLPTLDTGSQNGHPEGGSHPPQRRFQHTSAVILQVQPASPVTPQQCAPDDWKEVVPAEKSVPVARPGPSPHQQAIIPAIPGGLPGPKSPNIQQCPAHETGQGIVHALTDLSSPGMTSGNGNSASSIAGTAPQNGENKPPQAIVKPQILTHVIEGFVIQEGAEPFPVGRSSLLVGNLKKKYAQGFLPEKPPQQDHTTTTDSEMEEPYLQESKEEGTPLKLKCELCGRVDFAYKFKRSKRFCSMACAKRYNVGCTKRVGLFHSDRSKLQKAGTTTHNRRRASKASLPTLTKDTKKQPSGTVPLSVTAALQLAHSQEDSSRCSDNSSYEEPLSPISASSSTSRRRQGQRDLDLPDMHMRDLVGVGHHFLPSEPTKWNVEDVYEFIRSLPGCQEIAEEFRAQEIDGQALLLLKEDHLMSAMNIKLGPALKIYARISMLKDS.

Disordered stretches follow at residues 1–79 (MENE…QYLQ), 233–314 (QQTP…RAVP), 335–386 (LPQP…DHAL), 402–436 (THVH…PPQR), and 528–553 (MTSG…KPPQ). Over residues 15-32 (SVTTNTSGTNSSSGCISS) the composition is skewed to low complexity. The segment at 33 to 56 (SGGGGGSGGRPTAPQISVYSGIPD) is interaction with BMI1. Over residues 343–352 (PQPQFVAQQQ) the composition is skewed to low complexity. Polar residues-rich tracts occupy residues 368 to 380 (LASV…LQSS) and 402 to 425 (THVH…SQNG). Positions 529 to 543 (TSGNGNSASSIAGTA) are enriched in low complexity. An HD1 motif is present at residues 550–579 (KPPQAIVKPQILTHVIEGFVIQEGAEPFPV). Residues K590 and K592 each participate in a glycyl lysine isopeptide (Lys-Gly) (interchain with G-Cter in SUMO2) cross-link. The tract at residues 597 to 624 (FLPEKPPQQDHTTTTDSEMEEPYLQESK) is disordered. T611 is modified (phosphothreonine). Phosphoserine is present on S613. Residue K624 forms a Glycyl lysine isopeptide (Lys-Gly) (interchain with G-Cter in SUMO2) linkage. Residues 625–659 (EEGTPLKLKCELCGRVDFAYKFKRSKRFCSMACAK) form an FCS-type zinc finger. 4 residues coordinate Zn(2+): C634, C637, C653, and C657. Disordered regions lie at residues 676–712 (RSKL…SGTV) and 725–764 (SQED…LDLP). K694 participates in a covalent cross-link: Glycyl lysine isopeptide (Lys-Gly) (interchain with G-Cter in SUMO2). Residues 696–712 (SLPTLTKDTKKQPSGTV) are compositionally biased toward polar residues. At S743 the chain carries Phosphoserine. The 65-residue stretch at 786-850 (WNVEDVYEFI…YARISMLKDS (65 aa)) folds into the SAM domain. K839 is covalently cross-linked (Glycyl lysine isopeptide (Lys-Gly) (interchain with G-Cter in SUMO2)).

In terms of assembly, component of a PRC1-like complex. Interacts with CBX4. Interacts with BMI1, PCGF2, PHC1 and RNF2. Interacts with CHTOP. Interacts with the N-terminal region of the SP1 transcription factor and with MAPKAPK2. Interacts with SAMD7. Interacts with SAMD11. In terms of tissue distribution, isoform 2 is ubiquitously expressed in embryos and adult tissues at much higher level than isoform 1.

It localises to the nucleus. Its function is as follows. Component of a Polycomb group (PcG) multiprotein PRC1-like complex, a complex class required to maintain the transcriptionally repressive state of many genes, including Hox genes, throughout development. PcG PRC1 complex acts via chromatin remodeling and modification of histones; it mediates monoubiquitination of histone H2A 'Lys-119', rendering chromatin heritably changed in its expressibility. The protein is Polyhomeotic-like protein 2 (Phc2) of Mus musculus (Mouse).